Here is a 370-residue protein sequence, read N- to C-terminus: N-acetyldiaminopimelate deacetylase (370 aa).

The active site involves Asp-67. The active-site Proton acceptor is the Glu-126.

The protein belongs to the peptidase M20A family. N-acetyldiaminopimelate deacetylase subfamily.

The enzyme catalyses N-acetyl-(2S,6S)-2,6-diaminopimelate + H2O = (2S,6S)-2,6-diaminopimelate + acetate. The protein operates within amino-acid biosynthesis; L-lysine biosynthesis via DAP pathway; LL-2,6-diaminopimelate from (S)-tetrahydrodipicolinate (acetylase route): step 3/3. Its function is as follows. Catalyzes the conversion of N-acetyl-diaminopimelate to diaminopimelate and acetate. The chain is N-acetyldiaminopimelate deacetylase from Exiguobacterium sibiricum (strain DSM 17290 / CCUG 55495 / CIP 109462 / JCM 13490 / 255-15).